Consider the following 563-residue polypeptide: Tripeptidyl-peptidase 1 (563 aa).

Positions 1–19 (MGLQACLLGLFALILSGKC) are cleaved as a signal peptide. Residues 20–195 (SYSPEPDQRR…PEPQVTGTVG (176 aa)) constitute a propeptide, removed in mature form. The cysteines at positions 111 and 122 are disulfide-linked. The 365-residue stretch at 199-563 (GVTPSVIRKR…PALLKTLLNP (365 aa)) folds into the Peptidase S53 domain. N-linked (GlcNAc...) asparagine glycosylation is found at N210 and N222. Catalysis depends on charge relay system residues E272 and D276. N-linked (GlcNAc...) asparagine glycans are attached at residues N286, N313, and N443. 2 disulfides stabilise this stretch: C365–C526 and C522–C537. S475 functions as the Charge relay system in the catalytic mechanism. Positions 517 and 518 each coordinate Ca(2+). 3 residues coordinate Ca(2+): G539, G541, and D543.

Monomer. Interacts with CLN5. Interacts with CLN3. Requires Ca(2+) as cofactor. In terms of processing, activated by autocatalytic proteolytical processing upon acidification. N-glycosylation is required for processing and activity.

It is found in the lysosome. It localises to the melanosome. It carries out the reaction Release of an N-terminal tripeptide from a polypeptide, but also has endopeptidase activity.. Functionally, lysosomal serine protease with tripeptidyl-peptidase I activity. May act as a non-specific lysosomal peptidase which generates tripeptides from the breakdown products produced by lysosomal proteinases. Requires substrates with an unsubstituted N-terminus. In Macaca fascicularis (Crab-eating macaque), this protein is Tripeptidyl-peptidase 1 (TPP1).